The following is a 470-amino-acid chain: Transcriptional activator PmfR (470 aa).

As to quaternary structure, forms oligomers in solution, probably homotetramers.

Its pathway is alkaloid degradation; nicotine degradation [regulation]. Transcriptional regulator involved in the activation of the purU-mabO-folD-nepA-nepB and mao-ORF55-nbr operons implicated in the nicotine catabolic pathway. The sequence GTTT-14 bp-AAAC seems to be the core binding site of the regulator upstream of the -35 promoter region of the operon. This is Transcriptional activator PmfR (pmfR) from Paenarthrobacter nicotinovorans (Arthrobacter nicotinovorans).